The chain runs to 149 residues: SPbeta prophage-derived putative transcriptional regulator YosT (149 aa).

In Bacillus subtilis (strain 168), this protein is SPbeta prophage-derived putative transcriptional regulator YosT (yosT).